We begin with the raw amino-acid sequence, 198 residues long: GTP cyclohydrolase-2 (198 aa).

49–53 contacts GTP; the sequence is RVHSE. Zn(2+) contacts are provided by Cys-54, Cys-65, and Cys-67. GTP-binding positions include Gln-70, 92–94, and Thr-114; that span reads EGR. Catalysis depends on Asp-126, which acts as the Proton acceptor. The active-site Nucleophile is Arg-128. Residues Thr-149 and Lys-154 each coordinate GTP.

It belongs to the GTP cyclohydrolase II family. Homodimer. The cofactor is Zn(2+).

The enzyme catalyses GTP + 4 H2O = 2,5-diamino-6-hydroxy-4-(5-phosphoribosylamino)-pyrimidine + formate + 2 phosphate + 3 H(+). It participates in cofactor biosynthesis; riboflavin biosynthesis; 5-amino-6-(D-ribitylamino)uracil from GTP: step 1/4. Catalyzes the conversion of GTP to 2,5-diamino-6-ribosylamino-4(3H)-pyrimidinone 5'-phosphate (DARP), formate and pyrophosphate. The polypeptide is GTP cyclohydrolase-2 (Escherichia fergusonii (strain ATCC 35469 / DSM 13698 / CCUG 18766 / IAM 14443 / JCM 21226 / LMG 7866 / NBRC 102419 / NCTC 12128 / CDC 0568-73)).